The chain runs to 95 residues: Small ribosomal subunit protein uS19 (95 aa).

The segment at 76–95 (PTRTFRGHGGKKADKRGKLK) is disordered. Residues 80 to 95 (FRGHGGKKADKRGKLK) are compositionally biased toward basic residues.

It belongs to the universal ribosomal protein uS19 family.

Protein S19 forms a complex with S13 that binds strongly to the 16S ribosomal RNA. This chain is Small ribosomal subunit protein uS19, found in Herpetosiphon aurantiacus (strain ATCC 23779 / DSM 785 / 114-95).